The following is a 570-amino-acid chain: Zinc finger and BTB domain-containing protein 44 (570 aa).

Residue Lys4 forms a Glycyl lysine isopeptide (Lys-Gly) (interchain with G-Cter in SUMO2) linkage. Residues 31 to 98 form the BTB domain; that stretch reads CDITIRVQDK…AYTATLSINT (68 aa). A phosphoserine mark is found at Ser135, Ser159, Ser161, Ser165, Ser191, and Ser194. Disordered stretches follow at residues 194–220 and 243–267; these read SPVKCGTQTSSPQVLNSSASYSENRNQ and EKVKQAENTRTLELPGPSETGRRMA. Residues 199 to 220 are compositionally biased toward polar residues; it reads GTQTSSPQVLNSSASYSENRNQ. At Thr200 the chain carries Phosphothreonine. Lys290 participates in a covalent cross-link: Glycyl lysine isopeptide (Lys-Gly) (interchain with G-Cter in SUMO2). Positions 295-369 are disordered; that stretch reads SDEEVHEEVS…NAPPDDDDRL (75 aa). Over residues 304–318 the composition is skewed to low complexity; sequence SQPVSASQSSLSDQQ. Over residues 352 to 361 the composition is skewed to polar residues; that stretch reads TLQSTSSTNA. C2H2-type zinc fingers lie at residues 399–421, 427–449, 455–479, and 487–511; these read FQCPTCGVRFTRIQNLKQHMLIH, FQCDRCGKKFTRAYSLKMHRLKH, FRCQICSATFTSFGEYKHHMRVSRH, and YECKTCGAMFTNSGNLIVHLRSLNH.

Its subcellular location is the nucleus. Its function is as follows. May be involved in transcriptional regulation. The polypeptide is Zinc finger and BTB domain-containing protein 44 (ZBTB44) (Homo sapiens (Human)).